A 3856-amino-acid chain; its full sequence is Serine/threonine-protein kinase ATM (3856 aa).

Residues 108 to 162 form the PWWP domain; it reads VGNLVWVMTKYKKWWPGEVVDFKADAKESFMVRSIGQSHLVSWFASSKLKPFKES. Residues 648–681 are disordered; it reads GIPDLNGTNTEPTLVLPQVEPTQRRRRRKKEESP. The 667-residue stretch at 2727 to 3393 folds into the FAT domain; sequence VVAGSAVVCG…ILQLLALANG (667 aa). Positions 3233 to 3249 match the Bipartite nuclear localization signal motif; sequence RKHKTKELEVFIKRFKS. Residues 3499–3811 enclose the PI3K/PI4K catalytic domain; that stretch reads LSDSVTVMNG…GNKDATRALM (313 aa). Residues 3505-3511 form a G-loop region; sequence VMNGINA. A catalytic loop region spans residues 3678–3686; the sequence is GLGDRHAMN. The interval 3698 to 3722 is activation loop; the sequence is HIDLGVAFEQGLMLKTPERVPFRLT. The 33-residue stretch at 3824-3856 folds into the FATC domain; that stretch reads EMRSIHGQAQQLIQDAIDTDRLSHMFPGWGAWM.

It belongs to the PI3/PI4-kinase family. Interacts with RUG3. As to expression, ubiquitously expressed at low levels with slightly higher levels in flower buds.

The protein resides in the nucleus. The enzyme catalyses L-seryl-[protein] + ATP = O-phospho-L-seryl-[protein] + ADP + H(+). It catalyses the reaction L-threonyl-[protein] + ATP = O-phospho-L-threonyl-[protein] + ADP + H(+). Its function is as follows. Serine/threonine protein kinase which activates checkpoint signaling upon genotoxic stresses such as ionizing radiation (IR) or DNA replication stalling. Plays a central role in the perception and response to both stress-induced damage in somatic cells and developmentally programmed DNA damage during meiosis. Recognizes the substrate consensus sequence [ST]-Q. Phosphorylates histone variant H2AX to form H2AXS139ph at double strand breaks (DSBs), thereby regulating DNA damage response mechanism. Involved in transcriptional regulation of RAD51, PARP1, GR1, and LIG4 in response to DNA double strand breaks. Plays a dual role by activating the DNA damage response at dysfunctional telomeres and yet preventing this activation at functional telomeres. Not required for telomere length homeostasis. Regulates DNA damage response (DDR) synergistically with RUG3. Together with RUG3, involved in the splicing of the ND2/NAD2 mRNA. The protein is Serine/threonine-protein kinase ATM of Arabidopsis thaliana (Mouse-ear cress).